Reading from the N-terminus, the 83-residue chain is Delta-conotoxin-like MVIC (83 aa).

Residues 1–22 form the signal peptide; that stretch reads MKLTCVMIVAVLFLTTWTFVTA. Residues 23–49 constitute a propeptide that is removed on maturation; sequence DDSRYGLKNLFPKARHEMKNPEASKLN. Cystine bridges form between Cys54–Cys69, Cys61–Cys73, and Cys68–Cys78. 2 positions are modified to 4-hydroxyproline: Pro56 and Pro65.

This sequence belongs to the conotoxin O1 superfamily. In terms of tissue distribution, expressed by the venom duct.

The protein resides in the secreted. In terms of biological role, delta-conotoxins bind to site 6 of voltage-gated sodium channels (Nav) and inhibit the inactivation process. This is Delta-conotoxin-like MVIC from Conus magus (Magical cone).